We begin with the raw amino-acid sequence, 858 residues long: Volume-regulated anion channel subunit LRRC8D (858 aa).

Topologically, residues 1 to 22 are cytoplasmic; it reads MFTLAEVASLNDIQPTYRILKP. The chain crosses the membrane as a helical span at residues 23 to 48; sequence WWDVFMDYLAVVMLMVAIFAGTMQLT. The Extracellular portion of the chain corresponds to 49-163; the sequence is KDQVVCLPVL…YHLALPWYSK (115 aa). Residues C54 and C354 are joined by a disulfide bond. Residues 118 to 137 form a disordered region; the sequence is AESTFPSQETKKEKRDPTGR. A compositionally biased stretch (basic and acidic residues) spans 126–137; the sequence is ETKKEKRDPTGR. The helical transmembrane segment at 164–182 threads the bilayer; that stretch reads YFPYLALIHTIILMVSSNF. Topologically, residues 183–308 are cytoplasmic; that stretch reads WFKYPKTCSK…EDSDLIYKLY (126 aa). The interval 221 to 251 is disordered; that stretch reads SEENKQRITGAQTLPKHVSTSSDEGSPSAST. A compositionally biased stretch (polar residues) spans 227–251; it reads RITGAQTLPKHVSTSSDEGSPSAST. S241, S242, and S246 each carry phosphoserine. Residues 309–330 form a helical membrane-spanning segment; the sequence is VVQTLIKTAKFIFILCYTANFV. At 331-360 the chain is on the extracellular side; the sequence is NAISFEHVCKPKVEHLTGYEVFECTHNMAY. The helical transmembrane segment at 361–386 threads the bilayer; it reads MLKKLLISYISIICVYGFICLYTLFW. Over 387–858 the chain is Cytoplasmic; it reads LFRIPLKEYS…DVNVPFANGI (472 aa). LRR repeat units lie at residues 514–534, 538–559, 561–582, 589–609, 612–632, 636–657, 659–680, 684–705, 707–728, 730–751, 753–774, 776–797, and 799–820; these read NLQELHLCHCPAKVEQTAFSF, HLRCLHVKFTDVAEIPAWVYLL, NLRELYLIGNLNSENNKMIGLE, HLKILHVKSNLTKVPSNITDV, HLTKLVIHNDGTKLLVLNSLK, NVAELELQNCELERIPHAIFSL, NLQELDLKSNSIRTIEEIISFQ, RLTCLKLWHNKIVAIPPSITHV, NLESLYFSNNKLESLPVAVFSL, KLRCLDVSYNNISTIPIEIGLL, NLQHLHITGNKVDVLPKQLFKC, KLRTLNLGQNCIASLPEKISQL, and QLTQLELKGNCLDRLPAQLGQC.

It belongs to the LRRC8 family. Heterohexamer; oligomerizes with other LRRC8 proteins (LRRC8A, LRRC8B, LRRC8C and/or LRRC8E) to form a heterohexamer. In vivo, the subunit composition may depend primarily on expression levels, and heterooligomeric channels containing various proportions of the different LRRC8 proteins may coexist.

Its subcellular location is the cell membrane. It localises to the endoplasmic reticulum membrane. The enzyme catalyses chloride(in) = chloride(out). The catalysed reaction is iodide(out) = iodide(in). It carries out the reaction taurine(out) = taurine(in). Functionally, non-essential component of the volume-regulated anion channel (VRAC, also named VSOAC channel), an anion channel required to maintain a constant cell volume in response to extracellular or intracellular osmotic changes. The VRAC channel conducts iodide better than chloride and can also conduct organic osmolytes like taurine. Plays a redundant role in the efflux of amino acids, such as aspartate, in response to osmotic stress. Channel activity requires LRRC8A plus at least one other family member (LRRC8B, LRRC8C, LRRC8D or LRRC8E); channel characteristics depend on the precise subunit composition. Also acts as a regulator of glucose-sensing in pancreatic beta cells: VRAC currents, generated in response to hypotonicity- or glucose-induced beta cell swelling, depolarize cells, thereby causing electrical excitation, leading to increase glucose sensitivity and insulin secretion. VRAC channels containing LRRC8D inhibit transport of immunoreactive cyclic dinucleotide GMP-AMP (2'-3'-cGAMP), an immune messenger produced in response to DNA virus in the cytosol. The chain is Volume-regulated anion channel subunit LRRC8D from Rattus norvegicus (Rat).